Consider the following 129-residue polypeptide: Glycine cleavage system H protein (129 aa).

The 83-residue stretch at 24-106 (TFTVGITEHA…FGDGWLFRIK (83 aa)) folds into the Lipoyl-binding domain. Position 65 is an N6-lipoyllysine (K65).

Belongs to the GcvH family. As to quaternary structure, the glycine cleavage system is composed of four proteins: P, T, L and H. (R)-lipoate is required as a cofactor.

In terms of biological role, the glycine cleavage system catalyzes the degradation of glycine. The H protein shuttles the methylamine group of glycine from the P protein to the T protein. The chain is Glycine cleavage system H protein from Pseudoalteromonas translucida (strain TAC 125).